The following is a 577-amino-acid chain: Solute carrier family 22 member 16 (577 aa).

The helical transmembrane segment at 23-43 (LYFICAFQNISCGIHYLASVF) threads the bilayer. Asparagine 57, asparagine 65, asparagine 68, and asparagine 108 each carry an N-linked (GlcNAc...) asparagine glycan. The next 5 helical transmembrane spans lie at 152 to 172 (WLAMLIQPLFMFGVLLGSVTF), 183 to 203 (VVLWATSSSMFLFGIAAAFAV), 214 to 234 (FLAMVASGYLVVGFVYVMEFI), 244 to 264 (VHLHSFFAVGTLLVALTGYLV), and 268 to 288 (WLYQMILSTVTVPFILCCWVL). Residues asparagine 345 and asparagine 352 are each glycosylated (N-linked (GlcNAc...) asparagine). 6 helical membrane-spanning segments follow: residues 359 to 379 (TLTVWLIWFTGSLGFYSFSLN), 389 to 409 (LNLFLLGVVEIPAYTFVCIAM), 416 to 436 (TVLAYSLFCSALACGVVMVIP), 441 to 461 (ILGVVTAMVGKFAIGAAFGLI), 476 to 496 (LAVGSGSMVCRLASILAPFSV), and 501 to 521 (IWIFIPQLFVGTMALLSGVLT). The tract at residues 543-577 (ESENESKSSKLLLTTNNSGLEKTEAITPRDSGLGE) is disordered. 2 N-linked (GlcNAc...) asparagine glycosylation sites follow: asparagine 546 and asparagine 558. A compositionally biased stretch (low complexity) spans 551-560 (SKLLLTTNNS).

This sequence belongs to the major facilitator (TC 2.A.1) superfamily. Organic cation transporter (TC 2.A.1.19) family. Expressed in testis and epididymis (at protein level). Expressed in endometrium (at protein level); highly expressed during the normal secretory phase, but expression is significantly reduced in the proliferative phase. Expressed at lower levels in adult tissues including bone marrow (at protein level). Expressed in hematopoietic cells, including CD34(+) leukocytes. Expressed in fetal liver (at protein level), brain, lung, kidney, heart, skeletal muscle, spleen and thymus. Expressed in leukemia cells. Abundantly expressed in ovarian cancer clear-cell adenocarcinoma.

The protein resides in the cell membrane. The enzyme catalyses (R)-carnitine(in) = (R)-carnitine(out). The catalysed reaction is spermidine(in) = spermidine(out). Its function is as follows. Facilitative organic cation transporter that mediates the transport of carnitine as well as the polyamine spermidine. Mediates the partially Na(+)-dependent bidirectional transport of carnitine. May mediate L-carnitine secretion from testis epididymal epithelium into the lumen which is involved in the maturation of spermatozoa. In Homo sapiens (Human), this protein is Solute carrier family 22 member 16.